A 744-amino-acid chain; its full sequence is C-type polyheme cytochrome OmcB (744 aa).

An N-terminal signal peptide occupies residues Met-1–Gly-23. A lipid anchor (N-palmitoyl cysteine) is attached at Cys-24. Cys-24 carries the S-diacylglycerol cysteine lipid modification. Positions 48, 51, 52, 81, 84, 85, 107, 110, 111, 141, 144, 145, 185, 188, 189, 225, 228, 229, 303, 306, 307, 382, 385, 386, 430, 433, 434, 480, 483, 484, 555, 558, 559, 587, 590, and 591 each coordinate heme c.

Post-translationally, binds 12 heme c groups per subunit.

Its subcellular location is the cell outer membrane. Involved in anaerobic respiration with Fe(3+) as terminal electron acceptor. Acts as an electron-transport mediator in the dissimilatory reduction of Fe(3+). This chain is C-type polyheme cytochrome OmcB (omcB), found in Geobacter sulfurreducens (strain DL-1 / KN400).